A 545-amino-acid polypeptide reads, in one-letter code: Chaperonin GroEL (545 aa).

ATP is bound by residues 29-32, K50, 86-90, G413, and D495; these read TLGP and DGTTT.

It belongs to the chaperonin (HSP60) family. In terms of assembly, forms a cylinder of 14 subunits composed of two heptameric rings stacked back-to-back. Interacts with the co-chaperonin GroES.

It is found in the cytoplasm. It catalyses the reaction ATP + H2O + a folded polypeptide = ADP + phosphate + an unfolded polypeptide.. Together with its co-chaperonin GroES, plays an essential role in assisting protein folding. The GroEL-GroES system forms a nano-cage that allows encapsulation of the non-native substrate proteins and provides a physical environment optimized to promote and accelerate protein folding. This is Chaperonin GroEL from Borreliella burgdorferi (strain ATCC 35210 / DSM 4680 / CIP 102532 / B31) (Borrelia burgdorferi).